The following is a 230-amino-acid chain: Large ribosomal subunit protein uL1 (230 aa).

The protein belongs to the universal ribosomal protein uL1 family. Part of the 50S ribosomal subunit.

Functionally, binds directly to 23S rRNA. The L1 stalk is quite mobile in the ribosome, and is involved in E site tRNA release. Its function is as follows. Protein L1 is also a translational repressor protein, it controls the translation of the L11 operon by binding to its mRNA. The polypeptide is Large ribosomal subunit protein uL1 (Bradyrhizobium sp. (strain ORS 278)).